The sequence spans 1158 residues: MGLKIIYGRAGTGKSTFCINQIKKKINNSPTNKLILLVPEQFTFQTENKVLNAIGERYVLNAEVLSFKRLAHNVFNECGGATRTIMGDAGKSMLIFKVLEDLGDNMTVFKNASRQKGFIDIASKTITEFKKYNVNNEVLDLTINEIEDENLKMKMEELKDVFNEFNSRLHEGYVDEEDQLLLLNEKLDGCSLYDGAEIWIDEFSSFTPNQLSVIGKLLKKAKSVNITLSIDEVNSPKVESDLFVATKNTEKRLMNLIQEEGIAFNGYINLNEDIPYRFKENKELAHIERQLYAYPFKQYRGENNSLRLYRANNNYDEIEFVAKDILRLVREKQYRFKDISVICREVDNYEKVISAIFAEYEIPYYIDKKIDIASNPLIVFINSAVDIISKNWTYESMFKYLKTGLIKEFRGIEGAELIDELENYVLAYGIKGKKWMEEWVNYSSSILKEEEISEENKQRLERLNDIRETIVTPLDEFNKECKGKKTLKEFAIILYEFLDSKLNIMDTIDKYVEYFKENDMAIEAKEYSEVRDIFIDVLEQAVDVLGNEVMDLDEFMKVLNIGLSQYEMGLIPVALDQVNIGDITRIKSRGTKALYIIGVNDGVLPSASKEEGILSDNDREILLEKGISLASDTRTKIFEEQFLVYTAFTIAEEYLVVTYPLADFEGKSQRPSIIVHRLKKILPNVKEESEGFKLVNDKYDKISAKIPTLNELMIAIRKNYDGAEIDDYWKYVYDWYLREPKWKERIEYVRKGLEYTNLENNISKEKAKKLYEDNKNKISLSVSRLERYAQCPFAYYIQYGLKAKDRKIYEFTAPDLGSFMHEILDEFTNEIKEKDLKWSDLSKENCKNIINSLVDNQVKNNKSSILNSSKRYSYFTDRFKRILTKSVMVISEQMKRSDFEIYKNELAFGFSKDVNSIKLDLPSGESFYLNGRIDRIDKLNLDGETYLRIIDYKTGSKKFDLNKFYNGLQMQLLVYLDALINNSENIVENQAMPGAILYFRIDDPILKSKGDLTEEEIKSEILKELKLEGLLLDDVKVVKAMDNTLEPGTHSLIIPANMKKAGDLGKNKALITMEQFELLRKYVNEKMVEICQNMIEGKIDIEPCKENKNIVCDYCNYSHICQFDSSLEDNRYKVIPKKKDEDIWKSINEKVGGEVNGD.

8-15 is a binding site for ATP; that stretch reads GRAGTGKS. [4Fe-4S] cluster is bound by residues Cys-791, Cys-1112, Cys-1115, and Cys-1121.

It belongs to the helicase family. AddB/RexB type 1 subfamily. In terms of assembly, heterodimer of AddA and AddB. Mg(2+) serves as cofactor. Requires [4Fe-4S] cluster as cofactor.

In terms of biological role, the heterodimer acts as both an ATP-dependent DNA helicase and an ATP-dependent, dual-direction single-stranded exonuclease. Recognizes the chi site generating a DNA molecule suitable for the initiation of homologous recombination. The AddB subunit has 5' -&gt; 3' nuclease activity but not helicase activity. The chain is ATP-dependent helicase/deoxyribonuclease subunit B from Clostridium perfringens (strain SM101 / Type A).